The primary structure comprises 477 residues: Probable cytosolic Fe-S cluster assembly factor CG17683 (477 aa).

Residues Cys-23, Cys-68, Cys-71, Cys-74, Cys-187, Cys-243, Cys-395, and Cys-399 each contribute to the [4Fe-4S] cluster site.

Belongs to the NARF family.

Component of the cytosolic iron-sulfur (Fe/S) protein assembly machinery. Required for maturation of extramitochondrial Fe/S proteins. The polypeptide is Probable cytosolic Fe-S cluster assembly factor CG17683 (Drosophila melanogaster (Fruit fly)).